Reading from the N-terminus, the 748-residue chain is Ribonucleoprotein PTB-binding 1 (748 aa).

Positions 1–42 (MAADVSVTHRPPLSPEAEAEAETPETVDRRTPEQELPPLDPE) are disordered. An N-acetylalanine modification is found at alanine 2. Phosphoserine occurs at positions 6 and 14. At threonine 31 the chain carries Phosphothreonine. Residues 45–60 (RKRLEHTERQFRNRRK) carry the Nuclear localization signal motif. RRM domains lie at 59-130 (RKIL…LQPT), 132-210 (ALLC…WTDA), and 221-299 (RCLC…FCAP). An interaction with PTBP1 region spans residues 307-401 (LAALIAAQAT…QSQSQKKPGI (95 aa)). 3 disordered regions span residues 390–505 (QSQS…GEPP), 525–647 (SNLA…PLSH), and 672–731 (KAVG…QHSQ). The residue at position 469 (threonine 469) is a Phosphothreonine. A phosphoserine mark is found at serine 480, serine 576, serine 626, and serine 630. Residues 675–685 (GSSPMGSSEGL) are compositionally biased toward low complexity. 2 positions are modified to phosphoserine: serine 716 and serine 720. The short motif at 743 to 746 (KRKR) is the Nuclear localization signal element.

In terms of assembly, interacts with PTBP1, RAVER2, VCL and ACTN1. Part of a complex containing RAVER1, VCL and ACTN1. In terms of tissue distribution, ubiquitous. Detected in aorta, brain, gut, heart, kidney, liver, spleen, uterus and skeletal muscle.

Its subcellular location is the nucleus. The protein localises to the cytoplasm. Functionally, cooperates with PTBP1 to modulate regulated alternative splicing events. Promotes exon skipping. Cooperates with PTBP1 to modulate switching between mutually exclusive exons during maturation of the TPM1 pre-mRNA. This Rattus norvegicus (Rat) protein is Ribonucleoprotein PTB-binding 1 (Raver1).